A 528-amino-acid chain; its full sequence is Phosphoenolpyruvate carboxykinase (ATP) (528 aa).

Substrate-binding residues include Arg56, Tyr192, and Lys198. ATP contacts are provided by residues Lys198, His217, and 233 to 241 (GLSGTGKTT). The Mn(2+) site is built by Lys198 and His217. Asp254 contributes to the Mn(2+) binding site. 3 residues coordinate ATP: Glu282, Arg319, and Thr444. Residue Arg319 participates in substrate binding.

This sequence belongs to the phosphoenolpyruvate carboxykinase (ATP) family. It depends on Mn(2+) as a cofactor.

The protein resides in the cytoplasm. The catalysed reaction is oxaloacetate + ATP = phosphoenolpyruvate + ADP + CO2. It functions in the pathway carbohydrate biosynthesis; gluconeogenesis. Functionally, involved in the gluconeogenesis. Catalyzes the conversion of oxaloacetate (OAA) to phosphoenolpyruvate (PEP) through direct phosphoryl transfer between the nucleoside triphosphate and OAA. The chain is Phosphoenolpyruvate carboxykinase (ATP) from Lysinibacillus sphaericus (strain C3-41).